Reading from the N-terminus, the 90-residue chain is Probable Fe(2+)-trafficking protein (90 aa).

The protein belongs to the Fe(2+)-trafficking protein family.

Could be a mediator in iron transactions between iron acquisition and iron-requiring processes, such as synthesis and/or repair of Fe-S clusters in biosynthetic enzymes. The sequence is that of Probable Fe(2+)-trafficking protein from Haemophilus influenzae (strain PittEE).